The chain runs to 190 residues: Probable nicotinate-nucleotide adenylyltransferase (190 aa).

It belongs to the NadD family.

It catalyses the reaction nicotinate beta-D-ribonucleotide + ATP + H(+) = deamido-NAD(+) + diphosphate. It participates in cofactor biosynthesis; NAD(+) biosynthesis; deamido-NAD(+) from nicotinate D-ribonucleotide: step 1/1. Catalyzes the reversible adenylation of nicotinate mononucleotide (NaMN) to nicotinic acid adenine dinucleotide (NaAD). The chain is Probable nicotinate-nucleotide adenylyltransferase from Frankia casuarinae (strain DSM 45818 / CECT 9043 / HFP020203 / CcI3).